We begin with the raw amino-acid sequence, 533 residues long: Peptide chain release factor 3 (533 aa).

The tr-type G domain maps to 9–284 (ARRRTFAIIS…ALCQLSPPPL (276 aa)). Residues 18 to 25 (SHPDAGKT), 95 to 99 (DTPGH), and 149 to 152 (NKLD) contribute to the GTP site.

This sequence belongs to the TRAFAC class translation factor GTPase superfamily. Classic translation factor GTPase family. PrfC subfamily.

Its subcellular location is the cytoplasm. Increases the formation of ribosomal termination complexes and stimulates activities of RF-1 and RF-2. It binds guanine nucleotides and has strong preference for UGA stop codons. It may interact directly with the ribosome. The stimulation of RF-1 and RF-2 is significantly reduced by GTP and GDP, but not by GMP. The chain is Peptide chain release factor 3 from Cupriavidus pinatubonensis (strain JMP 134 / LMG 1197) (Cupriavidus necator (strain JMP 134)).